The primary structure comprises 872 residues: Alanine--tRNA ligase (872 aa).

Positions 567, 571, 669, and 673 each coordinate Zn(2+).

The protein belongs to the class-II aminoacyl-tRNA synthetase family. It depends on Zn(2+) as a cofactor.

It is found in the cytoplasm. It carries out the reaction tRNA(Ala) + L-alanine + ATP = L-alanyl-tRNA(Ala) + AMP + diphosphate. Functionally, catalyzes the attachment of alanine to tRNA(Ala) in a two-step reaction: alanine is first activated by ATP to form Ala-AMP and then transferred to the acceptor end of tRNA(Ala). Also edits incorrectly charged Ser-tRNA(Ala) and Gly-tRNA(Ala) via its editing domain. This Streptococcus agalactiae serotype III (strain NEM316) protein is Alanine--tRNA ligase.